Here is a 173-residue protein sequence, read N- to C-terminus: Bifunctional protein PyrR (173 aa).

A PRPP-binding motif is present at residues 94 to 106 (VILIDDVLYTGRT).

It belongs to the purine/pyrimidine phosphoribosyltransferase family. PyrR subfamily. Homodimer and homohexamer; in equilibrium.

It catalyses the reaction UMP + diphosphate = 5-phospho-alpha-D-ribose 1-diphosphate + uracil. In terms of biological role, regulates transcriptional attenuation of the pyrimidine nucleotide (pyr) operon by binding in a uridine-dependent manner to specific sites on pyr mRNA. This disrupts an antiterminator hairpin in the RNA and favors formation of a downstream transcription terminator, leading to a reduced expression of downstream genes. Its function is as follows. Also displays a weak uracil phosphoribosyltransferase activity which is not physiologically significant. In Streptococcus gordonii (strain Challis / ATCC 35105 / BCRC 15272 / CH1 / DL1 / V288), this protein is Bifunctional protein PyrR.